We begin with the raw amino-acid sequence, 286 residues long: MNLKQKWDVYSRLTRLDRPIGTLLLLWPCLMALVLAAGGMPDIKVLIIFIIGVVIMRACGCIINDYADRDLDSHVERTRSRPLASGEISTKEALLLFVILGLAAFGLVLLLNGLVVKLSVVGIILTIIYPFTKRVTNMPQMFLGVVWSWSIPMAYAAQTGEVPIEAWWLFAANWFWTVAYDTMYAMVDRDDDLKVGIKSTAILFGQYDRQIIGLFQFAALLCFIAAGWSADRGLLYGLGLLTFVGFSTYQQMLIFGRERAPCFKAFLNNNWAGLALFVGLGADYLF.

The next 7 membrane-spanning stretches (helical) occupy residues 21–40 (GTLL…AGGM), 96–116 (LFVI…GLVV), 142–162 (FLGV…TGEV), 167–187 (WWLF…YAMV), 210–230 (QIIG…GWSA), 235–255 (LYGL…MLIF), and 266–286 (FLNN…DYLF).

It belongs to the UbiA prenyltransferase family. Requires Mg(2+) as cofactor.

The protein resides in the cell inner membrane. The enzyme catalyses all-trans-octaprenyl diphosphate + 4-hydroxybenzoate = 4-hydroxy-3-(all-trans-octaprenyl)benzoate + diphosphate. It functions in the pathway cofactor biosynthesis; ubiquinone biosynthesis. Its function is as follows. Catalyzes the prenylation of para-hydroxybenzoate (PHB) with an all-trans polyprenyl group. Mediates the second step in the final reaction sequence of ubiquinone-8 (UQ-8) biosynthesis, which is the condensation of the polyisoprenoid side chain with PHB, generating the first membrane-bound Q intermediate 3-octaprenyl-4-hydroxybenzoate. This is 4-hydroxybenzoate octaprenyltransferase from Shewanella sp. (strain MR-4).